Reading from the N-terminus, the 311-residue chain is MTDSESPIPKKSIPARFPKWLRQKLPLGRVFAQTDNTIKNKGLPTVCEEASCPNRTHCWSRHTATYLALGDACTRRCGFCDIDFTRNPLPPDPEEGAKIAESAKALGLKHIVITMVSRDDLEDGGASALVHIIETLHTELPTATIEVLASDFEGNIAALHHLLDAHIAIYNHNVETVERLTPFVRHKATYRRSLMMLENAAKYLPNLMTKSGIMVGLGEQESEVKQTLKDLADHGVKIVTIGQYLRPSRRHIPVKSYVSPETFDYYRSVGESLGLFIYAGPFVRSSFNADSVFEAMRQRETSTSALLPNKD.

7 residues coordinate [4Fe-4S] cluster: cysteine 47, cysteine 52, cysteine 58, cysteine 73, cysteine 77, cysteine 80, and serine 286. The region spanning 59 to 276 is the Radical SAM core domain; sequence WSRHTATYLA…RSVGESLGLF (218 aa).

The protein belongs to the radical SAM superfamily. Lipoyl synthase family. [4Fe-4S] cluster is required as a cofactor.

It localises to the cytoplasm. It carries out the reaction [[Fe-S] cluster scaffold protein carrying a second [4Fe-4S](2+) cluster] + N(6)-octanoyl-L-lysyl-[protein] + 2 oxidized [2Fe-2S]-[ferredoxin] + 2 S-adenosyl-L-methionine + 4 H(+) = [[Fe-S] cluster scaffold protein] + N(6)-[(R)-dihydrolipoyl]-L-lysyl-[protein] + 4 Fe(3+) + 2 hydrogen sulfide + 2 5'-deoxyadenosine + 2 L-methionine + 2 reduced [2Fe-2S]-[ferredoxin]. Its pathway is protein modification; protein lipoylation via endogenous pathway; protein N(6)-(lipoyl)lysine from octanoyl-[acyl-carrier-protein]: step 2/2. Functionally, catalyzes the radical-mediated insertion of two sulfur atoms into the C-6 and C-8 positions of the octanoyl moiety bound to the lipoyl domains of lipoate-dependent enzymes, thereby converting the octanoylated domains into lipoylated derivatives. In Chlamydia trachomatis serovar D (strain ATCC VR-885 / DSM 19411 / UW-3/Cx), this protein is Lipoyl synthase.